A 221-amino-acid chain; its full sequence is DELTA-actitoxin-Ucs1a (221 aa).

The first 19 residues, 1 to 19, serve as a signal peptide directing secretion; the sequence is MNRLIVLCLFVAMIYATIA. Residues 20 to 42 constitute a propeptide that is removed on maturation; that stretch reads LPKKEDISNDERSISVSKVPVKK. The plays an important role in the hemolytic activity stretch occupies residues 45–54; that stretch reads AIAGAVIEGA. The N-terminal region stretch occupies residues 53 to 72; the sequence is GAKLTFGILEKILTVLGDIN. Phosphocholine contacts are provided by Ser-96, Val-129, Ser-147, Pro-149, Tyr-175, Tyr-179, and Tyr-180. The trp-rich region, which is important for the binding to lipid membrane stretch occupies residues 147-162; that stretch reads SVPYDYNLYSNWWNIK. The short motif at 186 to 188 is the Cell attachment site, crucial for protein stability element; that stretch reads KGD.

The protein belongs to the actinoporin family. Sea anemone subfamily. As to quaternary structure, octamer or nonamer in membranes. Monomer in the soluble state.

Its subcellular location is the secreted. The protein resides in the nematocyst. It is found in the target cell membrane. Its function is as follows. Pore-forming protein that forms cations-selective hydrophilic pores of around 1 nm and causes cytolysis. Pore formation is a multi-step process that involves specific recognition of membrane sphingomyelin (but neither cholesterol nor phosphatidylcholine) using aromatic rich region and adjacent phosphocholine (POC) binding site, firm binding to the membrane (mainly driven by hydrophobic interactions) accompanied by the transfer of the N-terminal region to the lipid-water interface and finally pore formation after oligomerization of monomers. This Urticina crassicornis (Mottled anemone) protein is DELTA-actitoxin-Ucs1a.